Here is a 131-residue protein sequence, read N- to C-terminus: MAPSLWKGLVGIGLFALAHAAFSAAQHRSYMRLTEKEDESLPIDIVLQTLLAFAVTCYGIVHIAGEFKDMDATSELKNKTFDTLRNHPSFYVFNHRGRVLFRPSDTANSSNQDALSSNTSLKLRKLESLRR.

At 1-3 (MAP) the chain is on the cytoplasmic side. The chain crosses the membrane as a helical span at residues 4-22 (SLWKGLVGIGLFALAHAAF). At 23 to 43 (SAAQHRSYMRLTEKEDESLPI) the chain is on the lumenal side. Residues 44–63 (DIVLQTLLAFAVTCYGIVHI) form a helical membrane-spanning segment. Residues 64 to 131 (AGEFKDMDAT…KLRKLESLRR (68 aa)) lie on the Cytoplasmic side of the membrane. At Ser-120 the chain carries Phosphoserine.

This sequence belongs to the membrane magnesium transporter (TC 1.A.67) family. As to quaternary structure, component of the ER membrane protein complex (EMC).

Its subcellular location is the endoplasmic reticulum membrane. The protein localises to the golgi apparatus membrane. The protein resides in the early endosome membrane. In terms of biological role, part of the endoplasmic reticulum membrane protein complex (EMC) that enables the energy-independent insertion into endoplasmic reticulum membranes of newly synthesized membrane proteins. Preferentially accommodates proteins with transmembrane domains that are weakly hydrophobic or contain destabilizing features such as charged and aromatic residues. Involved in the cotranslational insertion of multi-pass membrane proteins in which stop-transfer membrane-anchor sequences become ER membrane spanning helices. It is also required for the post-translational insertion of tail-anchored/TA proteins in endoplasmic reticulum membranes. By mediating the proper cotranslational insertion of N-terminal transmembrane domains in an N-exo topology, with translocated N-terminus in the lumen of the ER, controls the topology of multi-pass membrane proteins like the G protein-coupled receptors. By regulating the insertion of various proteins in membranes, it is indirectly involved in many cellular processes. May be involved in Mg(2+) transport. The chain is ER membrane protein complex subunit 5 from Homo sapiens (Human).